The chain runs to 393 residues: Cytochrome b (393 aa).

4 consecutive transmembrane segments (helical) span residues 32–52 (FGSL…FLAM), 76–98 (WLIR…LHIG), 113–133 (LWSI…LGYV), and 179–199 (FFSL…MHLL). The heme b site is built by His82 and His96. Residues His183 and His197 each coordinate heme b. His202 contributes to the a ubiquinone binding site. A run of 4 helical transmembrane segments spans residues 225-245 (FTFK…LFVF), 289-309 (LIGV…PILD), 321-341 (LMRF…FIGS), and 348-368 (YVEI…VVVP).

It belongs to the cytochrome b family. In terms of assembly, fungal cytochrome b-c1 complex contains 10 subunits; 3 respiratory subunits, 2 core proteins and 5 low-molecular weight proteins. Cytochrome b-c1 complex is a homodimer. The cofactor is heme b.

It is found in the mitochondrion inner membrane. Component of the ubiquinol-cytochrome c reductase complex (complex III or cytochrome b-c1 complex) that is part of the mitochondrial respiratory chain. The b-c1 complex mediates electron transfer from ubiquinol to cytochrome c. Contributes to the generation of a proton gradient across the mitochondrial membrane that is then used for ATP synthesis. In Mycosarcoma maydis (Corn smut fungus), this protein is Cytochrome b (COB).